The chain runs to 889 residues: DNA-directed RNA polymerase subunit Rpo1N (889 aa).

Residues Cys62, Cys65, Cys72, His75, Cys102, Cys105, Cys149, and Cys152 each coordinate Zn(2+). Residues Asp466, Asp468, and Asp470 each contribute to the Mg(2+) site.

This sequence belongs to the RNA polymerase beta' chain family. Part of the RNA polymerase complex. Requires Mg(2+) as cofactor. The cofactor is Zn(2+).

It is found in the cytoplasm. The enzyme catalyses RNA(n) + a ribonucleoside 5'-triphosphate = RNA(n+1) + diphosphate. In terms of biological role, DNA-dependent RNA polymerase (RNAP) catalyzes the transcription of DNA into RNA using the four ribonucleoside triphosphates as substrates. Forms the clamp head domain. In Methanococcus vannielii (strain ATCC 35089 / DSM 1224 / JCM 13029 / OCM 148 / SB), this protein is DNA-directed RNA polymerase subunit Rpo1N.